The following is a 391-amino-acid chain: Alanine racemase, biosynthetic (391 aa).

The Proton acceptor; specific for D-alanine role is filled by lysine 52. N6-(pyridoxal phosphate)lysine is present on lysine 52. Arginine 149 provides a ligand contact to substrate. Tyrosine 271 serves as the catalytic Proton acceptor; specific for L-alanine. Methionine 330 is a binding site for substrate.

It belongs to the alanine racemase family. Requires pyridoxal 5'-phosphate as cofactor.

It catalyses the reaction L-alanine = D-alanine. The protein operates within amino-acid biosynthesis; D-alanine biosynthesis; D-alanine from L-alanine: step 1/1. Its pathway is cell wall biogenesis; peptidoglycan biosynthesis. Catalyzes the interconversion of L-alanine and D-alanine. Provides the D-alanine required for cell wall biosynthesis. The sequence is that of Alanine racemase, biosynthetic (alr) from Agrobacterium fabrum (strain C58 / ATCC 33970) (Agrobacterium tumefaciens (strain C58)).